The following is a 96-amino-acid chain: Small ribosomal subunit protein bS6 (96 aa).

It belongs to the bacterial ribosomal protein bS6 family.

In terms of biological role, binds together with bS18 to 16S ribosomal RNA. The protein is Small ribosomal subunit protein bS6 of Salinispora arenicola (strain CNS-205).